The sequence spans 916 residues: MFAPLLKKLFGSKNERDVKRMAKAVQAINALEPQMVALSDEQLKAKTAEFQQRYAKGETLDQLLPEAFAVVREAGKRVMGMRHFDVQLIGGMTLHDGKIAEMRTGEGKTLVGTLPVYLNALSGKGVHVVTVNDYLARRDANWMRPLYEFLGLSVGVVTPFQPPEDKRAAYAADITYGTNNEFGFDYLRDNMAFSLDDKFQRELNFAVVDEVDSILIDEARTPLIISGQAEDSSELYIKINKLIPRLKRQVEEVEGKPSEEGHYSIDEKTRQVELNEQGHQFIEDLLSQNGLLGEGESLYSAHNLSLLTHVYAALRAHTLFHRNVEYIVQGDQILLIDEHTGRTMPGRRLSEGLHQAIEAKEGLPIQAESQTLASTTFQNYFRLYNKLAGMTGTADTEAFEFRQIYGLDVVVIPTHRPIARKDFNDLVYLTQEEKYAAIITDIKQCQALGRPILVGTASIESSEYVSKLLQQAGIEHKVLNAKYHEKEAEIIAQAGAPGSVTIATNMAGRGTDILLGGNWEVEVAALENPTEEQIAQIKAEWQKRHQQVIEAGGLHVIASERHESRRIDNQLRGRAGRQGDPGSSRFYLSLEDNLMRIFASDRVKNFMKALGMQSGEAIEHRMVTNAIEKAQRKVEGRNFDIRKQLLEFDDVANEQRKVIYHMRNTLLSAEDVGETIKEFREETLNATINQHIPPQSLPEQWDVEGLEAALYSDFAVRLPIQQWLDEDDKLYEETLRSKILEQIVAAYYEKEELAGAEALRAFEKQMLLRVLDDLWKDHLSTMDHLRHGIHLRGYAQKNPKQEYKRESFTLFQELLDSIKRDTIRVLSHVQVRREDPAEEEARLRREAEELAKRMQFQHAEAPSMEQAVAGEDEELPEGPAPVVPLEPVRNEQKIGRNEPCPCGSGKKYKHCHGQLD.

ATP-binding positions include Q87, 105 to 109 (GEGKT), and D512. A disordered region spans residues 857-916 (QHAEAPSMEQAVAGEDEELPEGPAPVVPLEPVRNEQKIGRNEPCPCGSGKKYKHCHGQLD). Residues C900, C902, C911, and H912 each contribute to the Zn(2+) site. The segment covering 906 to 916 (KKYKHCHGQLD) has biased composition (basic residues).

Belongs to the SecA family. In terms of assembly, monomer and homodimer. Part of the essential Sec protein translocation apparatus which comprises SecA, SecYEG and auxiliary proteins SecDF-YajC and YidC. Zn(2+) serves as cofactor.

The protein localises to the cell inner membrane. Its subcellular location is the cytoplasm. It catalyses the reaction ATP + H2O + cellular proteinSide 1 = ADP + phosphate + cellular proteinSide 2.. Functionally, part of the Sec protein translocase complex. Interacts with the SecYEG preprotein conducting channel. Has a central role in coupling the hydrolysis of ATP to the transfer of proteins into and across the cell membrane, serving both as a receptor for the preprotein-SecB complex and as an ATP-driven molecular motor driving the stepwise translocation of polypeptide chains across the membrane. This Pseudomonas paraeruginosa (strain DSM 24068 / PA7) (Pseudomonas aeruginosa (strain PA7)) protein is Protein translocase subunit SecA.